Reading from the N-terminus, the 353-residue chain is Phosphate acyltransferase (353 aa).

This sequence belongs to the PlsX family. Homodimer. Probably interacts with PlsY.

It is found in the cytoplasm. The catalysed reaction is a fatty acyl-[ACP] + phosphate = an acyl phosphate + holo-[ACP]. It participates in lipid metabolism; phospholipid metabolism. Catalyzes the reversible formation of acyl-phosphate (acyl-PO(4)) from acyl-[acyl-carrier-protein] (acyl-ACP). This enzyme utilizes acyl-ACP as fatty acyl donor, but not acyl-CoA. This is Phosphate acyltransferase from Rhodopseudomonas palustris (strain ATCC BAA-98 / CGA009).